Consider the following 296-residue polypeptide: uncharacterized protein (296 aa).

The next 6 helical transmembrane spans lie at 1-21, 30-50, 71-91, 92-112, 113-133, and 142-162; these read MVNL…IFDY, LITA…GFWL, FISF…FVLC, LAQL…STLA, IGLA…LVLF, and IEVA…TTIC.

The protein belongs to the MscS (TC 1.A.23) family.

The protein resides in the cell membrane. This is an uncharacterized protein from Synechocystis sp. (strain ATCC 27184 / PCC 6803 / Kazusa).